The following is a 402-amino-acid chain: Multidrug resistance protein MdtH (402 aa).

Residues 1 to 12 (MSRVSQARNLGK) are Cytoplasmic-facing. A helical membrane pass occupies residues 13–33 (YFLLIDNMLVVLGFFVVFPLI). Residues 34-98 (SIRFIDQMGW…GFATMGIAHE (65 aa)) lie on the Periplasmic side of the membrane. Residues 99–116 (PWLLWFSCFLSGLGGTLF) form a helical membrane-spanning segment. Residues 117 to 138 (DPPRSALVVKLIRPEQRGRFFS) are Cytoplasmic-facing. Residues 139–159 (LLMMQDSAGAVIGALLGSWLL) traverse the membrane as a helical segment. Residues 160–164 (QYDFR) are Periplasmic-facing. The chain crosses the membrane as a helical span at residues 165 to 185 (LVCATGAILFILCALFNAWLL). Topologically, residues 186–213 (PAWKLSTVRTPVREGMRRVMSDKRFVTY) are cytoplasmic. The chain crosses the membrane as a helical span at residues 214-234 (VLTLAGYYMLAVQVMLMLPIM). Residues 235–243 (VNDIAGSPA) are Periplasmic-facing. A helical transmembrane segment spans residues 244–264 (AVKWMYAIEACLSLTLLYPIA). The Cytoplasmic portion of the chain corresponds to 265 to 276 (RWSEKRFRLEHR). The helical transmembrane segment at 277-297 (LMAGLLVMSLSMIPIGMVGNL) threads the bilayer. At 298-299 (QQ) the chain is on the periplasmic side. Residues 300–320 (LFTLICAFYIGSVIAEPARET) traverse the membrane as a helical segment. Over 321–339 (LSASLADARARGSYMGFSR) the chain is Cytoplasmic. The helical transmembrane segment at 340-360 (LGLAIGGAIGYIGGGWLFDMG) threads the bilayer. Residues 361–367 (KALTQPE) are Periplasmic-facing. A helical transmembrane segment spans residues 368–388 (LPWMMLGIIGFITFLALGWQF). Residues 389–402 (SHKRTPRRMLEPGA) lie on the Cytoplasmic side of the membrane.

Belongs to the major facilitator superfamily. DHA1 family. MdtH (TC 2.A.1.2.21) subfamily.

The protein resides in the cell inner membrane. This chain is Multidrug resistance protein MdtH, found in Salmonella paratyphi C (strain RKS4594).